The chain runs to 214 residues: Large ribosomal subunit protein uL3 (214 aa).

Residues 129-157 (FGRGPMSHGSKNHRRPGSIGAGTTPGRVF) are disordered.

This sequence belongs to the universal ribosomal protein uL3 family. Part of the 50S ribosomal subunit. Forms a cluster with proteins L14 and L19.

Its function is as follows. One of the primary rRNA binding proteins, it binds directly near the 3'-end of the 23S rRNA, where it nucleates assembly of the 50S subunit. This chain is Large ribosomal subunit protein uL3, found in Synechococcus sp. (strain JA-2-3B'a(2-13)) (Cyanobacteria bacterium Yellowstone B-Prime).